The chain runs to 1054 residues: Desmoglein-1 (1054 aa).

The first 23 residues, 1–23 (MNWHFLRTATVLLIFLVVVEINS), serve as a signal peptide directing secretion. A propeptide spanning residues 24 to 49 (EFRIQVRDYNTKNGTIKWHSIRRQKR) is cleaved from the precursor. Residues Asn36, Asn110, and Asn180 are each glycosylated (N-linked (GlcNAc...) asparagine). Cadherin domains lie at 50–157 (EWIK…PPVF), 158–269 (SMST…IPYM), 270–389 (EPSS…RPGS), and 386–493 (RPGS…KDSE). At 50-566 (EWIKFAAACR…NLSDNVHFGP (517 aa)) the chain is on the extracellular side. Positions 487–554 (GWEKDSEKVT…QSNNNHQELG (68 aa)) are disordered. Residues 496 to 507 (TSSQNSGSSTGD) are compositionally biased toward low complexity. Gly residues predominate over residues 508–517 (SSGGTGGGGR). The span at 523-534 (GDTTTNTGGKTS) shows a compositional bias: low complexity. Positions 542 to 554 (TQTQSNNNHQELG) are enriched in polar residues. A glycan (N-linked (GlcNAc...) asparagine) is linked at Asn557. Residues 567-587 (AGIGLLIMGFLVLGLVPFLLM) form a helical membrane-spanning segment. The Cytoplasmic segment spans residues 588–1054 (CCDCGGAPGA…TKYSTVQYTK (467 aa)). Desmoglein repeat repeat units lie at residues 830–856 (TYPSGPGVQHPMPIPDPLGYGNVTVTE), 857–886 (SYTTSGTLKPTVHVHDNRHASNVVVTERVV), 887–916 (GPISGTDLHGMLEMPDLRDGSNVIVTERVI), 917–944 (APSSSLPTSLTMPDPRESSNVVVTERVI), and 945–973 (RPASGMMGNLSIHPELSNAQNVIVTERVV). Residues 1018–1040 (GHVRSSSDHHFSQTLGSASPSTA) form a disordered region. Polar residues predominate over residues 1029–1040 (SQTLGSASPSTA).

In terms of assembly, binds to JUP/plakoglobin. Interacts with PKP2. Interacts with DSC3; there is evidence to suggest that the interaction promotes cell-cell adhesion of keratinocytes.

It is found in the cell membrane. Its subcellular location is the cell junction. The protein resides in the desmosome. It localises to the cytoplasm. The protein localises to the nucleus. Its function is as follows. Component of intercellular desmosome junctions. Involved in the interaction of plaque proteins and intermediate filaments mediating cell-cell adhesion. This chain is Desmoglein-1 (DSG1), found in Canis lupus familiaris (Dog).